A 422-amino-acid chain; its full sequence is Serine--tRNA ligase (422 aa).

A disordered region spans residues 1-20 (MHDLKSIRDNPDGFDAGLKR). Position 229-231 (229-231 (TAE)) interacts with L-serine. 260-262 (RSE) provides a ligand contact to ATP. Residue glutamate 283 coordinates L-serine. 347–350 (EISS) contacts ATP. Serine 383 serves as a coordination point for L-serine.

This sequence belongs to the class-II aminoacyl-tRNA synthetase family. Type-1 seryl-tRNA synthetase subfamily. In terms of assembly, homodimer. The tRNA molecule binds across the dimer.

The protein resides in the cytoplasm. The enzyme catalyses tRNA(Ser) + L-serine + ATP = L-seryl-tRNA(Ser) + AMP + diphosphate + H(+). It carries out the reaction tRNA(Sec) + L-serine + ATP = L-seryl-tRNA(Sec) + AMP + diphosphate + H(+). The protein operates within aminoacyl-tRNA biosynthesis; selenocysteinyl-tRNA(Sec) biosynthesis; L-seryl-tRNA(Sec) from L-serine and tRNA(Sec): step 1/1. Functionally, catalyzes the attachment of serine to tRNA(Ser). Is also able to aminoacylate tRNA(Sec) with serine, to form the misacylated tRNA L-seryl-tRNA(Sec), which will be further converted into selenocysteinyl-tRNA(Sec). This Paramagnetospirillum magneticum (strain ATCC 700264 / AMB-1) (Magnetospirillum magneticum) protein is Serine--tRNA ligase.